The sequence spans 403 residues: Protein-export membrane protein SecD (403 aa).

6 consecutive transmembrane segments (helical) span residues 14-34 (VILL…MGIQ), 238-258 (FAEG…VILI), 265-285 (ILVL…LGAA), 294-314 (LAAI…QIII), 336-356 (FFII…LAYI), and 365-385 (IGLL…GVFI).

The protein belongs to the SecD/SecF family. SecD subfamily. As to quaternary structure, part of the protein translocation apparatus. Forms a complex with SecF.

The protein resides in the cell membrane. Involved in protein export. This chain is Protein-export membrane protein SecD, found in Methanothermobacter thermautotrophicus (strain ATCC 29096 / DSM 1053 / JCM 10044 / NBRC 100330 / Delta H) (Methanobacterium thermoautotrophicum).